A 430-amino-acid polypeptide reads, in one-letter code: MFVDQVKISLKAGDGGNGITAYRREKYVPFGGPAGGDGGKGASVVFEVDEGSRTLLDFRYQRHFKASKGENGQSSNMHGKNAEDLVLKVPPGTIIKNVETDEVLADLVEDGQRAVVAKGGRGGRGNSRFATPRNPAPDFSEKGEPGEELDVSLELKLLADVGLVGFPSVGKSTLLSIVSKAKPKIGAYHFTTIKPNLGVVSAPDQRSFVMADLPGLIEGASDGVGLGHQFLRHVERTKVIVHMIDMSGSEGREPIEDYKVINQELAAYEQRLEDRPQIVVANKMDLPESQDNLILFKEEIGEDVPVIPVSTITRDNIDQLLYAIADKLEEYKDVDFTVEEEESVGINRVLYKHTPSQDKFTILRDDDGAYVVSGNAIERMFKMTDFNSDPAVRRFARQMRSMGIDDALRERGCKNGDIVRILGGEFEFVE.

Residues 1 to 158 (MFVDQVKISL…LDVSLELKLL (158 aa)) form the Obg domain. The interval 118-145 (KGGRGGRGNSRFATPRNPAPDFSEKGEP) is disordered. Positions 159 to 329 (ADVGLVGFPS…LLYAIADKLE (171 aa)) constitute an OBG-type G domain. Residues 165-172 (GFPSVGKS), 190-194 (FTTIK), 212-215 (DLPG), 282-285 (NKMD), and 310-312 (STI) contribute to the GTP site. Ser172 and Thr192 together coordinate Mg(2+). One can recognise an OCT domain in the interval 352–430 (KHTPSQDKFT…ILGGEFEFVE (79 aa)).

Belongs to the TRAFAC class OBG-HflX-like GTPase superfamily. OBG GTPase family. Monomer. The cofactor is Mg(2+).

Its subcellular location is the cytoplasm. In terms of biological role, an essential GTPase which binds GTP, GDP and possibly (p)ppGpp with moderate affinity, with high nucleotide exchange rates and a fairly low GTP hydrolysis rate. Plays a role in control of the cell cycle, stress response, ribosome biogenesis and in those bacteria that undergo differentiation, in morphogenesis control. This Staphylococcus aureus (strain bovine RF122 / ET3-1) protein is GTPase Obg.